The following is a 1009-amino-acid chain: Glutamate receptor ionotropic, delta-2 (1009 aa).

The signal sequence occupies residues 1–23 (MKVFPAVLFLITFWSLEWEPVLP). The Extracellular portion of the chain corresponds to 24 to 566 (DSIIHIGAIF…DMFACLAPFD (543 aa)). N-linked (GlcNAc...) asparagine glycosylation is found at Asn-293, Asn-306, Asn-390, and Asn-426. The Ca(2+) site is built by Glu-531, Val-534, and Asp-535. The helical transmembrane segment at 567–587 (LSLWACIAGTVLLVGTLVYLL) threads the bilayer. Topologically, residues 588–635 (NWLNPPRLPMGSVSSTTLYNSMWFVYGSFVQQGGEVPYTTLATRMMMG) are cytoplasmic. Residues 636–656 (VWWLFALIVISSYTANLAAFL) traverse the membrane as a helical segment. Residues 657–830 (TISRIENSIQ…KSGSALDIHS (174 aa)) lie on the Extracellular side of the membrane. A glycan (N-linked (GlcNAc...) asparagine) is linked at Asn-713. Positions 753, 755, and 757 each coordinate Ca(2+). Residues 831–851 (FAGVFFVLAAGVVLSCLIATV) traverse the membrane as a helical segment. Residues 852–1009 (ETWWTRRKGS…GNDPDRGTSI (158 aa)) lie on the Cytoplasmic side of the membrane. Residues 989–1009 (YQPTPAPNFSYGNDPDRGTSI) are disordered.

The protein belongs to the glutamate-gated ion channel (TC 1.A.10.1) family. GRID2 subfamily. Tetramer; dimer of dimers. In terms of tissue distribution, expressed in cerebellar Purkinje cells, in crest cells in the medial octavolateral nucleus and in type I neurons of the optic tectum.

It is found in the postsynaptic cell membrane. The catalysed reaction is Ca(2+)(in) = Ca(2+)(out). It carries out the reaction Na(+)(in) = Na(+)(out). Its function is as follows. Member of the ionotropic glutamate receptor family, which plays a crucial role in synaptic organization and signal transduction in the central nervous system. Although it shares structural features with ionotropic glutamate receptors, does not bind glutamate as a primary ligand. Promotes synaptogenesis and mediates the D-Serine-dependent long term depression signals and AMPA receptor endocytosis of cerebellar parallel fiber-Purkinje cell (PF-PC) synapses through the NRX1B-CBLN1-GRID2 triad complex. In the presence of neurexins and cerebellins, forms cation-selective channels that are proposed to be gated by glycine and D-serine. However, recent research disputes this ligand-gated cation channel activity. Cation-selective ion channel activity can be triggered by GRM1 in Purkinje cells. This Danio rerio (Zebrafish) protein is Glutamate receptor ionotropic, delta-2.